The following is a 1194-amino-acid chain: Immunoglobulin superfamily member 3 (1194 aa).

Positions 1–19 (MKCFFPVLSCLAVLGVVSA) are cleaved as a signal peptide. Ig-like C2-type domains follow at residues 20–138 (QRQV…AKMN), 143–262 (PDSL…WYAM), 276–386 (PTDK…KTVT), 401–539 (PIIV…ISIT), 545–661 (FAVT…WTRL), 676–803 (PVTK…EEVS), 813–945 (PDSR…TALT), and 949–1097 (PDAS…YRLT). The Extracellular portion of the chain corresponds to 20–1124 (QRQVTVQEGP…LQSIICSNDA (1105 aa)). Cystine bridges form between Cys-42/Cys-120 and Cys-167/Cys-246. Residue Asn-43 is glycosylated (N-linked (GlcNAc...) asparagine). Residues 250–252 (EWI) carry the EWI motif motif. Cysteines 302 and 376 form a disulfide. An N-linked (GlcNAc...) asparagine glycan is attached at Asn-418. 2 disulfides stabilise this stretch: Cys-432/Cys-511 and Cys-566/Cys-645. N-linked (GlcNAc...) asparagine glycosylation is present at Asn-655. Intrachain disulfides connect Cys-701–Cys-782, Cys-838–Cys-918, and Cys-974–Cys-1080. Asn-842 is a glycosylation site (N-linked (GlcNAc...) asparagine). The interval 997 to 1033 (AGGKRSSPGLEEQEEEREEEEEEDDDDDDDPTERTAL) is disordered. The span at 1007–1027 (EEQEEEREEEEEEDDDDDDDP) shows a compositional bias: acidic residues. Asn-1077 carries N-linked (GlcNAc...) asparagine glycosylation. A helical transmembrane segment spans residues 1125–1145 (LFYFVFFYPFPIFGILIITIL). Over 1146–1194 (LVRFKSRNSSKNSDGKNGVPLLWIKEPHLNYSPTCLEPPVLSIHPGAID) the chain is Cytoplasmic.

In terms of tissue distribution, expressed in a wide range of tissues with High expression in Placenta, kidney and lung.

Its subcellular location is the membrane. This Homo sapiens (Human) protein is Immunoglobulin superfamily member 3 (IGSF3).